Consider the following 486-residue polypeptide: Membrane-bound lytic murein transglycosylase F (486 aa).

The first 28 residues, Met1–Ala28, serve as a signal peptide directing secretion. The non-LT domain stretch occupies residues Glu29 to Val267. The interval Asp268–Leu486 is LT domain. Residue Glu314 is part of the active site.

In the N-terminal section; belongs to the bacterial solute-binding protein 3 family. This sequence in the C-terminal section; belongs to the transglycosylase Slt family.

The protein resides in the cell outer membrane. It carries out the reaction Exolytic cleavage of the (1-&gt;4)-beta-glycosidic linkage between N-acetylmuramic acid (MurNAc) and N-acetylglucosamine (GlcNAc) residues in peptidoglycan, from either the reducing or the non-reducing ends of the peptidoglycan chains, with concomitant formation of a 1,6-anhydrobond in the MurNAc residue.. In terms of biological role, murein-degrading enzyme that degrades murein glycan strands and insoluble, high-molecular weight murein sacculi, with the concomitant formation of a 1,6-anhydromuramoyl product. Lytic transglycosylases (LTs) play an integral role in the metabolism of the peptidoglycan (PG) sacculus. Their lytic action creates space within the PG sacculus to allow for its expansion as well as for the insertion of various structures such as secretion systems and flagella. The polypeptide is Membrane-bound lytic murein transglycosylase F (Stutzerimonas stutzeri (strain A1501) (Pseudomonas stutzeri)).